The chain runs to 521 residues: Two-component response regulator ARR11 (521 aa).

The Response regulatory domain maps to R12–L127. The residue at position 63 (D63) is a 4-aspartylphosphate. Residues K192–R195 carry the Nuclear localization signal motif. Residues R195–R246 constitute a DNA-binding region (myb-like GARP).

Belongs to the ARR family. Type-B subfamily. Binds the target DNA as a monomer. Post-translationally, two-component system major event consists of a His-to-Asp phosphorelay between a sensor histidine kinase (HK) and a response regulator (RR). In plants, the His-to-Asp phosphorelay involves an additional intermediate named Histidine-containing phosphotransfer protein (HPt). This multistep phosphorelay consists of a His-Asp-His-Asp sequential transfer of a phosphate group between first a His and an Asp of the HK protein, followed by the transfer to a conserved His of the HPt protein and finally the transfer to an Asp in the receiver domain of the RR protein. In terms of tissue distribution, detected in the whole plant. Predominantly expressed in roots and stems.

The protein resides in the nucleus. In terms of biological role, transcriptional activator that binds specifically to the DNA sequence 5'-[AG]GATT-3'. Functions as a response regulator involved in His-to-Asp phosphorelay signal transduction system. Phosphorylation of the Asp residue in the receiver domain activates the ability of the protein to promote the transcription of target genes. Could directly activate some type-A response regulators in response to cytokinins. The sequence is that of Two-component response regulator ARR11 (ARR11) from Arabidopsis thaliana (Mouse-ear cress).